The sequence spans 120 residues: NAD(P)H-quinone oxidoreductase subunit 3, chloroplastic (120 aa).

The next 3 helical transmembrane spans lie at 9 to 29, 64 to 84, and 88 to 108; these read IFWA…IISG, MFAL…PWAM, and VLGV…IVGS.

Belongs to the complex I subunit 3 family. As to quaternary structure, NDH is composed of at least 16 different subunits, 5 of which are encoded in the nucleus.

Its subcellular location is the plastid. It is found in the chloroplast thylakoid membrane. The enzyme catalyses a plastoquinone + NADH + (n+1) H(+)(in) = a plastoquinol + NAD(+) + n H(+)(out). It catalyses the reaction a plastoquinone + NADPH + (n+1) H(+)(in) = a plastoquinol + NADP(+) + n H(+)(out). Its function is as follows. NDH shuttles electrons from NAD(P)H:plastoquinone, via FMN and iron-sulfur (Fe-S) centers, to quinones in the photosynthetic chain and possibly in a chloroplast respiratory chain. The immediate electron acceptor for the enzyme in this species is believed to be plastoquinone. Couples the redox reaction to proton translocation, and thus conserves the redox energy in a proton gradient. The sequence is that of NAD(P)H-quinone oxidoreductase subunit 3, chloroplastic from Lemna minor (Common duckweed).